A 382-amino-acid polypeptide reads, in one-letter code: Cytochrome c biogenesis CcmF N-terminal-like mitochondrial protein 1 (382 aa).

The next 4 membrane-spanning stretches (helical) occupy residues 1–21, 30–50, 79–99, and 117–137; these read MSIS…FVAF, AFGA…LLFC, HEGS…FFCY, and SLFF…LLRY.

This sequence belongs to the CcmF/CycK/Ccl1/NrfE/CcsA family. Interacts with CCMFN2 and CCMH.

It is found in the mitochondrion inner membrane. Its function is as follows. Forms a complex with CCMFC, CCMFN2 and CCMH that performs the assembly of heme with c-type apocytochromes in mitochondria. This chain is Cytochrome c biogenesis CcmF N-terminal-like mitochondrial protein 1, found in Arabidopsis thaliana (Mouse-ear cress).